We begin with the raw amino-acid sequence, 123 residues long: WAP four-disulfide core domain protein 5 (123 aa).

Residues 1–24 (MRIQSLLLLGALLAVGSQLPAVFG) form the signal peptide. WAP domains follow at residues 27-73 (KGEK…CVPR) and 74-121 (VSVK…RDPA). Cystine bridges form between Cys34/Cys62, Cys41/Cys66, Cys49/Cys61, Cys55/Cys70, Cys81/Cys109, Cys88/Cys113, Cys96/Cys108, and Cys102/Cys117.

It is found in the secreted. Its function is as follows. Putative acid-stable proteinase inhibitor. The chain is WAP four-disulfide core domain protein 5 (WFDC5) from Papio anubis (Olive baboon).